We begin with the raw amino-acid sequence, 372 residues long: tRNA-specific 2-thiouridylase MnmA (372 aa).

ATP-binding positions include 16–23 (GMSGGVDS) and M42. The tract at residues 102–104 (NPD) is interaction with target base in tRNA. C107 functions as the Nucleophile in the catalytic mechanism. Residues C107 and C205 are joined by a disulfide bond. G132 is an ATP binding site. The interval 155–157 (KDQ) is interaction with tRNA. C205 serves as the catalytic Cysteine persulfide intermediate. An interaction with tRNA region spans residues 317-318 (RY).

It belongs to the MnmA/TRMU family.

Its subcellular location is the cytoplasm. It carries out the reaction S-sulfanyl-L-cysteinyl-[protein] + uridine(34) in tRNA + AH2 + ATP = 2-thiouridine(34) in tRNA + L-cysteinyl-[protein] + A + AMP + diphosphate + H(+). Its function is as follows. Catalyzes the 2-thiolation of uridine at the wobble position (U34) of tRNA, leading to the formation of s(2)U34. The sequence is that of tRNA-specific 2-thiouridylase MnmA from Shewanella baltica (strain OS195).